A 907-amino-acid polypeptide reads, in one-letter code: Leucine--tRNA ligase (907 aa).

The 'HIGH' region motif lies at 42–52 (PYPSGKLHMGH). Positions 651 to 655 (TMSKS) match the 'KMSKS' region motif. K654 contributes to the ATP binding site.

It belongs to the class-I aminoacyl-tRNA synthetase family.

The protein localises to the cytoplasm. The enzyme catalyses tRNA(Leu) + L-leucine + ATP = L-leucyl-tRNA(Leu) + AMP + diphosphate. The sequence is that of Leucine--tRNA ligase from Verminephrobacter eiseniae (strain EF01-2).